A 271-amino-acid polypeptide reads, in one-letter code: Protein PXR1 (271 aa).

The region spanning 25–72 is the G-patch domain; the sequence is TSRFGHQFLEKFGWKPGMGLGLYPMNSNTSHIKVSIKDDNVGLGAKLK. The tract at residues 147-239 is disordered; sequence SNAKKRKREG…SASNIPDAVN (93 aa). Residues 157–168 are compositionally biased toward acidic residues; sequence DDSEDEDDDDKE. Positions 175 to 203 are enriched in basic residues; the sequence is KKHKKHKKHKKDKKKDKKDKKEHKKHKKE. Positions 204 to 221 are enriched in basic and acidic residues; the sequence is EKRLKKEKRAEKTKETKK. Phosphoserine is present on serine 230.

It belongs to the PINX1 family. Interacts with EST2.

The protein resides in the nucleus. It is found in the nucleolus. Involved in rRNA-processing at A0, A1 and A2 sites through its action in U18 and U24 snoRNA 3'-end final trimming. Negative regulator of telomerase throughX competition for binding to EST2 with TLC1. The polypeptide is Protein PXR1 (PXR1) (Saccharomyces cerevisiae (strain YJM789) (Baker's yeast)).